Reading from the N-terminus, the 476-residue chain is Replication factor C large subunit (476 aa).

Residue glycine 43–threonine 50 coordinates ATP. The interval leucine 435–phenylalanine 476 is disordered.

Belongs to the activator 1 small subunits family. RfcL subfamily. As to quaternary structure, heteromultimer composed of small subunits (RfcS) and large subunits (RfcL).

In terms of biological role, part of the RFC clamp loader complex which loads the PCNA sliding clamp onto DNA. The polypeptide is Replication factor C large subunit (Methanocorpusculum labreanum (strain ATCC 43576 / DSM 4855 / Z)).